The primary structure comprises 272 residues: Shikimate dehydrogenase (NADP(+)) (272 aa).

Shikimate contacts are provided by residues 14 to 16 (SKS) and Thr61. Residue Lys65 is the Proton acceptor of the active site. An NADP(+)-binding site is contributed by Glu77. Residues Asn86 and Asp102 each contribute to the shikimate site. Residues 126 to 130 (GAGGA), 149 to 154 (NRTVSR), and Met213 contribute to the NADP(+) site. Residue Tyr215 coordinates shikimate. Position 237 (Gly237) interacts with NADP(+).

Belongs to the shikimate dehydrogenase family. In terms of assembly, homodimer.

The catalysed reaction is shikimate + NADP(+) = 3-dehydroshikimate + NADPH + H(+). Its pathway is metabolic intermediate biosynthesis; chorismate biosynthesis; chorismate from D-erythrose 4-phosphate and phosphoenolpyruvate: step 4/7. In terms of biological role, involved in the biosynthesis of the chorismate, which leads to the biosynthesis of aromatic amino acids. Catalyzes the reversible NADPH linked reduction of 3-dehydroshikimate (DHSA) to yield shikimate (SA). This chain is Shikimate dehydrogenase (NADP(+)), found in Shigella flexneri serotype 5b (strain 8401).